The following is a 108-amino-acid chain: Trp operon repressor homolog (108 aa).

Residues 59–82 mediate DNA binding; the sequence is QRQISQLLGVGVATITRGSNELKS.

The protein belongs to the TrpR family. In terms of assembly, homodimer.

Its subcellular location is the cytoplasm. Its function is as follows. This protein is an aporepressor. When complexed with L-tryptophan it binds the operator region of the trp operon and prevents the initiation of transcription. In Aliivibrio fischeri (strain ATCC 700601 / ES114) (Vibrio fischeri), this protein is Trp operon repressor homolog.